The primary structure comprises 109 residues: Tetraspanin-31 (109 aa).

At 1-12 (MVCGGFACSKNA) the chain is on the cytoplasmic side. A helical membrane pass occupies residues 13–33 (LCALNVVYMLVGLLLIGVAAW). Over 34-44 (AKGLGLVSSIH) the chain is Extracellular. A helical transmembrane segment spans residues 45-65 (IIGGVIAVGVFLLLIAVAGLV). Residues 66-72 (GAVNHHQ) are Cytoplasmic-facing. The chain crosses the membrane as a helical span at residues 73–93 (VLLFFYMIILGLVFIFQFGIS). Residues 94–109 (CSCLAINLSKQAGIIN) are Extracellular-facing. Residue asparagine 100 is glycosylated (N-linked (GlcNAc...) asparagine).

This sequence belongs to the tetraspanin (TM4SF) family.

The protein resides in the membrane. This chain is Tetraspanin-31 (TSPAN31), found in Sus scrofa (Pig).